The chain runs to 468 residues: Spliceosome-associated protein CWC27 homolog (468 aa).

At S2 the chain carries N-acetylserine. One can recognise a PPIase cyclophilin-type domain in the interval T11 to V166. Disordered stretches follow at residues L204 to T382 and R427 to R468. Positions S206–S229 form a coiled coil. Residues S231–H241 are compositionally biased toward basic and acidic residues. Residues T256–V268 show a composition bias toward acidic residues. Basic and acidic residues-rich tracts occupy residues E269–A287 and G302–G342. S273 carries the post-translational modification Phosphoserine. Residues A309–G342 adopt a coiled-coil conformation. S343 is modified (phosphoserine). Basic and acidic residues-rich tracts occupy residues E356–R368 and R453–R468.

It belongs to the cyclophilin-type PPIase family. As to quaternary structure, part of the activated spliceosome B/catalytic step 1 spliceosome, one of the forms of the spliceosome which has a well-formed active site but still cannot catalyze the branching reaction and is composed at least of 52 proteins, the U2, U5 and U6 snRNAs and the pre-mRNA. Recruited during early steps of activated spliceosome B maturation, it is probably one of the first proteins released from this complex as he matures to the spliceosome C complex. Component of the minor spliceosome, which splices U12-type introns.

The protein localises to the nucleus. Functionally, as part of the spliceosome, plays a role in pre-mRNA splicing. Probable inactive PPIase with no peptidyl-prolyl cis-trans isomerase activity. As a component of the minor spliceosome, involved in the splicing of U12-type introns in pre-mRNAs. This Rattus norvegicus (Rat) protein is Spliceosome-associated protein CWC27 homolog.